We begin with the raw amino-acid sequence, 661 residues long: MAESEENSVLFPIFILTMMAIPLVPYTFVKLSRAFSKKQRSIHCQCLECDRSGKYKRSISQSISSFTSCSNLTVVLLWIVMIFLIYHTKNMSRESQLFEPFGILGLEPGASDSEIKKAYRRLSIQYHPDKNPDPEANKYFVESIAKAYQALTDPLSRENFEKYGHPDGRQGYTMGIALPQFILNMNGESGGILLLCTVGLCILLPLVIASIYLWRSSKYTGNHVKLQTRQAYFELLQPSLTPSKVMDIFIRAAEYAEISVRKSDDESLQKLFMSVKSELNLDPKKLKQEEAKFWKKHPATIKTELLIQKQLTRESSVLSPTLQRDFRHVLEFAPRLLEDLIKMAVIPRNEQGRGWLRPALGVMELSQCIVQAVPLSARKSSSEDIAPFLQLPHFNESIAKSIALQVKSFQKFQELSLAERSKLLREVVSLSETDVQDIEKVLEMIPSLKINVTCKTEGEEGIQEGDIMTVQAWITLKRPNGLIGAIPHSPYFPFHKEENFWVLLADSNHVWFFQKVKFMDEAGAIAAASNTITETMEPLGASVKETNDAVKEAVEKVKSGSRLVMGRLLAPGEGTYNLTCFCLSDTWIGCDQKTSLKVEVLKRTRDVEGENAEEGLEEEDDEIEEEDYESEYSEDEEDKKRGSKKKVNKESSSEESGSDEE.

Residues 1–8 (MAESEENS) lie on the Lumenal side of the membrane. The chain crosses the membrane as a helical span at residues 9–29 (VLFPIFILTMMAIPLVPYTFV). Over 30-65 (KLSRAFSKKQRSIHCQCLECDRSGKYKRSISQSISS) the chain is Cytoplasmic. A helical membrane pass occupies residues 66–86 (FTSCSNLTVVLLWIVMIFLIY). Residues 87 to 190 (HTKNMSRESQ…FILNMNGESG (104 aa)) are Lumenal-facing. N90 carries N-linked (GlcNAc...) asparagine glycosylation. Positions 99 to 164 (EPFGILGLEP…LSRENFEKYG (66 aa)) constitute a J domain. The helical transmembrane segment at 191–211 (GILLLCTVGLCILLPLVIASI) threads the bilayer. Residues 206–597 (LVIASIYLWR…IGCDQKTSLK (392 aa)) enclose the SEC63 domain. Topologically, residues 212-661 (YLWRSSKYTG…SSEESGSDEE (450 aa)) are cytoplasmic. Residues 608 to 661 (EGENAEEGLEEEDDEIEEEDYESEYSEDEEDKKRGSKKKVNKESSSEESGSDEE) form a disordered region. Acidic residues predominate over residues 609–637 (GENAEEGLEEEDDEIEEEDYESEYSEDEE).

As to quaternary structure, interacts with OEP61/TPR7. In terms of tissue distribution, expressed in leaves, flower buds and flowers.

It is found in the endoplasmic reticulum membrane. Functionally, required for integral membrane and secreted preprotein translocation across the endoplasmic reticulum membrane. The polypeptide is DnaJ protein ERDJ2B (ERDJ2B) (Arabidopsis thaliana (Mouse-ear cress)).